A 91-amino-acid chain; its full sequence is Probable Fe(2+)-trafficking protein (91 aa).

Belongs to the Fe(2+)-trafficking protein family. As to quaternary structure, monomer.

Its function is as follows. Could be a mediator in iron transactions between iron acquisition and iron-requiring processes, such as synthesis and/or repair of Fe-S clusters in biosynthetic enzymes. The chain is Probable Fe(2+)-trafficking protein from Salmonella agona (strain SL483).